The sequence spans 256 residues: Homeobox protein ceh-34 (256 aa).

The segment at residues 134–193 (GEETNYCFKSKSRNVLRDAYKKCQYPSVEDKRRLAQQTELSIIQVSNWFKNKRQRERAAG) is a DNA-binding region (homeobox). A disordered region spans residues 187–233 (QRERAAGQLDRSSARSNDSDDGSSGCESKPPMNIDSPAPPPLPTSFD).

It belongs to the SIX/Sine oculis homeobox family. In terms of assembly, interacts (via N-terminus) with eya-1 (via C-terminus). In terms of tissue distribution, shows expression only in the pharyngeal nervous system.

Its subcellular location is the nucleus. In terms of biological role, acts as a transcription regulator. Binds to the sequence motif 5'-TCAGGTT-3'. Binds to the cis-regulatory element of proapoptotic factor egl-1 gene and together with eya-1 activates egl-1 expression to promote motor neuron M4 sister cell apoptosis. Also promotes apoptosis of I1 pharyngeal neuron sister cell. Together with eya-1, required to specify the coelomocyte fate in embryonic and postembryonic precursors. Required to establish and maintain the differentiation of all 14 classes of pharyngeal neurons. Controls the neurotransmitter signaling capacity of the neurons and is required for the expression of some neurotransmitter receptors including mgl-1, glr-2 and ser-7. Affects the neuropeptidergic identity of pharyngeal neurons. Required for the pharyngeal expression of sensory receptors gur-3, glu-7 and str-97, antimicrobial defense genes such as spp-12, gpla-1/flr-2 and htrl-1, and pan-pharyngeal nervous system genes such as kin-36. Required to establish and maintain pharyngeal nervous system architecture by ensuring correct axon and synapse organization. Required for expression of eya-1 which may act as a transcriptional cofactor to specify distinct pharyngeal neuron types. Cooperates with several homeobox proteins to specify distinct pharyngeal neuron types including unc-86 in the NSM and I1 neurons, ceh-14 in the I2 neuron, ceh-2 and pros-1 in the I3 neuron, ceh-45 in the M1 neuron, ceh-2 in the M3 neuron, ceh-28 and zag-1 in the M4 neuron, and vab-15 in the M5 neuron. The polypeptide is Homeobox protein ceh-34 (ceh-34) (Caenorhabditis elegans).